The sequence spans 414 residues: ORC1-type DNA replication protein 1 (414 aa).

Residues 70–74 (TGKTA), Y213, and R225 contribute to the ATP site.

Belongs to the CDC6/cdc18 family.

In terms of biological role, involved in regulation of DNA replication. The polypeptide is ORC1-type DNA replication protein 1 (cdc6-1) (Methanosarcina mazei (strain ATCC BAA-159 / DSM 3647 / Goe1 / Go1 / JCM 11833 / OCM 88) (Methanosarcina frisia)).